A 65-amino-acid chain; its full sequence is Large ribosomal subunit protein bL35 (65 aa).

The protein belongs to the bacterial ribosomal protein bL35 family.

The polypeptide is Large ribosomal subunit protein bL35 (Caldicellulosiruptor saccharolyticus (strain ATCC 43494 / DSM 8903 / Tp8T 6331)).